The chain runs to 705 residues: MLTPIIRKFQYGQHTVTIETGMMARQATAAVMVSMDDTAVFVTVVGQKKAKPGQSFFPLTVNYQERTYAAGRIPGSFFRREGRPSEGETLTSRLIDRPIRPLFPDSFLNEVQVIATVVSVNPQINPDIVALIGASAVLSLSGIPFNGPIGAARVGFINDQYVLNPTTDELKESRLDLVVAGTAGAVLMVESEADILSEEQMLGAVVFGHEQQQVVIENINALVAEAGKPKWDWQAEPVNEALHARVAELAEARLGDAYRITEKQERYTQVDAIKADVTEALLAQDDTLDAAEIQDILASVEKNVVRSRVLRGEPRIDGREKDMIRGLDVRTGILPRTHGSALFTRGETQALVTATLGTARDAQNIDELMGERTDSFLLHYNFPPYCVGETGMVGSPKRREIGHGRLAKRGVLAVMPSASEFPYTIRVVSEITESNGSSSMASVCGASLALMDAGVPIKAAVAGIAMGLVKEGDNFVVLSDILGDEDHLGDMDFKVAGSRDGVTALQMDIKIEGITREIMQVALNQAKGARLHILGVMEQAISTPRGDISEFAPRIYTMKINPEKIKDVIGKGGSVIRALTDETGTTIEIEDDGTIKIAATDGDKAKHAIRRIEEITAEIEVGRIYAGKVTRIVDFGAFVAIGGGKEGLVHISQIADKRVEKVTDYLQMGQDVPVKVMEVDRQGRIRLSIKEATTPDAEAPEAAAE.

2 residues coordinate Mg(2+): D486 and D492. The KH domain occupies 553 to 612 (PRIYTMKINPEKIKDVIGKGGSVIRALTDETGTTIEIEDDGTIKIAATDGDKAKHAIRRI). The 69-residue stretch at 622-690 (GRIYAGKVTR…RQGRIRLSIK (69 aa)) folds into the S1 motif domain.

The protein belongs to the polyribonucleotide nucleotidyltransferase family. Component of the RNA degradosome, which is a multiprotein complex involved in RNA processing and mRNA degradation. Mg(2+) serves as cofactor.

The protein resides in the cytoplasm. The enzyme catalyses RNA(n+1) + phosphate = RNA(n) + a ribonucleoside 5'-diphosphate. Functionally, involved in mRNA degradation. Catalyzes the phosphorolysis of single-stranded polyribonucleotides processively in the 3'- to 5'-direction. In Yersinia pestis bv. Antiqua (strain Nepal516), this protein is Polyribonucleotide nucleotidyltransferase.